The following is a 421-amino-acid chain: Imidazolonepropionase (421 aa).

2 residues coordinate Fe(3+): His-81 and His-83. 2 residues coordinate Zn(2+): His-81 and His-83. Residues Arg-90, Tyr-153, and His-186 each contribute to the 4-imidazolone-5-propanoate site. N-formimidoyl-L-glutamate is bound at residue Tyr-153. His-251 provides a ligand contact to Fe(3+). His-251 provides a ligand contact to Zn(2+). 4-imidazolone-5-propanoate is bound at residue Glu-254. Asp-326 contacts Fe(3+). Asp-326 contributes to the Zn(2+) binding site. The N-formimidoyl-L-glutamate site is built by Asn-328 and Gly-330. Residue Ser-331 participates in 4-imidazolone-5-propanoate binding.

It belongs to the metallo-dependent hydrolases superfamily. HutI family. It depends on Zn(2+) as a cofactor. Requires Fe(3+) as cofactor.

The protein resides in the cytoplasm. The enzyme catalyses 4-imidazolone-5-propanoate + H2O = N-formimidoyl-L-glutamate. It functions in the pathway amino-acid degradation; L-histidine degradation into L-glutamate; N-formimidoyl-L-glutamate from L-histidine: step 3/3. Functionally, catalyzes the hydrolytic cleavage of the carbon-nitrogen bond in imidazolone-5-propanoate to yield N-formimidoyl-L-glutamate. It is the third step in the universal histidine degradation pathway. This Streptococcus pyogenes serotype M6 (strain ATCC BAA-946 / MGAS10394) protein is Imidazolonepropionase.